Consider the following 306-residue polypeptide: Pantothenate kinase (306 aa).

90–97 (GSVAVGKS) is a binding site for ATP.

The protein belongs to the prokaryotic pantothenate kinase family.

Its subcellular location is the cytoplasm. It carries out the reaction (R)-pantothenate + ATP = (R)-4'-phosphopantothenate + ADP + H(+). The protein operates within cofactor biosynthesis; coenzyme A biosynthesis; CoA from (R)-pantothenate: step 1/5. The polypeptide is Pantothenate kinase (Listeria monocytogenes serotype 4a (strain HCC23)).